Consider the following 319-residue polypeptide: Acetyl-coenzyme A carboxylase carboxyl transferase subunit alpha (319 aa).

The 255-residue stretch at 39-293 (RLQKKSNDLT…KAVLEKQLHE (255 aa)) folds into the CoA carboxyltransferase C-terminal domain.

Belongs to the AccA family. Acetyl-CoA carboxylase is a heterohexamer composed of biotin carboxyl carrier protein (AccB), biotin carboxylase (AccC) and two subunits each of ACCase subunit alpha (AccA) and ACCase subunit beta (AccD).

The protein localises to the cytoplasm. The enzyme catalyses N(6)-carboxybiotinyl-L-lysyl-[protein] + acetyl-CoA = N(6)-biotinyl-L-lysyl-[protein] + malonyl-CoA. It functions in the pathway lipid metabolism; malonyl-CoA biosynthesis; malonyl-CoA from acetyl-CoA: step 1/1. Functionally, component of the acetyl coenzyme A carboxylase (ACC) complex. First, biotin carboxylase catalyzes the carboxylation of biotin on its carrier protein (BCCP) and then the CO(2) group is transferred by the carboxyltransferase to acetyl-CoA to form malonyl-CoA. The sequence is that of Acetyl-coenzyme A carboxylase carboxyl transferase subunit alpha from Neisseria meningitidis serogroup A / serotype 4A (strain DSM 15465 / Z2491).